Consider the following 472-residue polypeptide: NADH-quinone oxidoreductase subunit N 2 (472 aa).

Transmembrane regions (helical) follow at residues 3–23 (WMSF…LLLS), 34–54 (HVAA…SVGA), 67–87 (LFSQ…VTLC), 106–126 (FVCT…VVFI), 156–176 (FLVG…LYGA), 198–218 (VVIG…VFPF), 233–253 (VSAY…VRVI), 263–283 (LVHV…LAAI), 291–311 (LLAY…LSMN), 317–337 (AAVF…LVLV), 360–380 (ILAL…PTVG), 398–418 (TLVL…LLVI), and 441–461 (LLSG…NQII).

It belongs to the complex I subunit 2 family. In terms of assembly, NDH-1 is composed of 14 different subunits. Subunits NuoA, H, J, K, L, M, N constitute the membrane sector of the complex.

It localises to the cell inner membrane. The enzyme catalyses a quinone + NADH + 5 H(+)(in) = a quinol + NAD(+) + 4 H(+)(out). Its function is as follows. NDH-1 shuttles electrons from NADH, via FMN and iron-sulfur (Fe-S) centers, to quinones in the respiratory chain. The immediate electron acceptor for the enzyme in this species is believed to be ubiquinone. Couples the redox reaction to proton translocation (for every two electrons transferred, four hydrogen ions are translocated across the cytoplasmic membrane), and thus conserves the redox energy in a proton gradient. The protein is NADH-quinone oxidoreductase subunit N 2 of Syntrophobacter fumaroxidans (strain DSM 10017 / MPOB).